Reading from the N-terminus, the 907-residue chain is Interference hedgehog (907 aa).

The N-terminal stretch at 1–23 (MSLTRRFSLTLLLLLPLLTSLLA) is a signal peptide. The Extracellular segment spans residues 24 to 709 (AIPVLQANLS…SHNETFNMNP (686 aa)). Ig-like C2-type domains follow at residues 42 to 149 (PGVR…ASIS), 152 to 233 (GADT…VRLA), 252 to 340 (PALL…FIEL), and 346 to 433 (PRIL…LQVN). 3 disulfide bridges follow: cysteine 65-cysteine 127, cysteine 173-cysteine 221, and cysteine 276-cysteine 324. N-linked (GlcNAc...) asparagine glycans are attached at residues asparagine 101, asparagine 203, asparagine 300, and asparagine 355. A disulfide bridge connects residues cysteine 367 and cysteine 415. Residues 427–474 (GTLLQVNPKQLPDGEGTGMDSGRSSARPTHSRKQKQQTQMVPPSAPNV) are disordered. The span at 462–474 (QQTQMVPPSAPNV) shows a compositional bias: polar residues. 2 consecutive Fibronectin type-III domains span residues 468-578 (PPSA…LQRG) and 586-681 (VPEL…TQRP). Asparagine 473 carries N-linked (GlcNAc...) asparagine glycosylation. Arginine 504, lysine 511, and lysine 513 together coordinate heparin. N-linked (GlcNAc...) asparagine glycosylation is found at asparagine 537 and asparagine 548. Arginine 552 contacts heparin. N-linked (GlcNAc...) asparagine glycosylation occurs at asparagine 568. A compositionally biased stretch (polar residues) spans 676 to 688 (GRTQRPRASSTPQ). The disordered stretch occupies residues 676–701 (GRTQRPRASSTPQPVLHAVDTTTPSH). N-linked (GlcNAc...) asparagine glycosylation is present at asparagine 702. The helical transmembrane segment at 710 to 730 (MLTGTIGGGALLVLLVISACL) threads the bilayer. Residues 731 to 907 (CLCRRRSSRG…SSGSLNSVGV (177 aa)) are Cytoplasmic-facing. Disordered regions lie at residues 780-805 (AQQQ…QDND) and 829-881 (MSSS…NKPG). Composition is skewed to low complexity over residues 781–794 (QQQQ…LQQQ) and 853–863 (NNNNLNQPGDG). The segment covering 865–878 (LANSADSPRLQASN) has biased composition (polar residues).

It belongs to the immunoglobulin superfamily. IHOG family. Homodimer. Heterotetramer; 2 iHog chains bind 2 hh chains when facilitated by heparin, heparin is required to promote high-affinity interactions between hh and iHog.

The protein localises to the membrane. Mediates response to the active Hedgehog (Hh) protein signal in embryos, functioning upstream or at the level of patched (ptc). This chain is Interference hedgehog, found in Drosophila virilis (Fruit fly).